Consider the following 461-residue polypeptide: Putative cytochrome P450 132 (461 aa).

Cys-409 is a heme binding site.

It belongs to the cytochrome P450 family. Heme is required as a cofactor.

In Mycobacterium tuberculosis (strain ATCC 25618 / H37Rv), this protein is Putative cytochrome P450 132 (cyp132).